A 93-amino-acid chain; its full sequence is Large ribosomal subunit protein uL23 (93 aa).

The protein belongs to the universal ribosomal protein uL23 family. As to quaternary structure, part of the 50S ribosomal subunit. Contacts protein L29, and trigger factor when it is bound to the ribosome.

Functionally, one of the early assembly proteins it binds 23S rRNA. One of the proteins that surrounds the polypeptide exit tunnel on the outside of the ribosome. Forms the main docking site for trigger factor binding to the ribosome. This is Large ribosomal subunit protein uL23 from Nautilia profundicola (strain ATCC BAA-1463 / DSM 18972 / AmH).